We begin with the raw amino-acid sequence, 357 residues long: Protein-glutamate methylesterase/protein-glutamine glutaminase 1 (357 aa).

The Response regulatory domain maps to 7–124 (KVLCVDDSAL…REGLLDYTQT (118 aa)). Aspartate 58 is subject to 4-aspartylphosphate. The region spanning 158–350 (LLSTEKLIIV…QRVMAHLATF (193 aa)) is the CheB-type methylesterase domain. Residues serine 170, histidine 196, and aspartate 292 contribute to the active site.

The protein belongs to the CheB family. In terms of processing, phosphorylated by CheA. Phosphorylation of the N-terminal regulatory domain activates the methylesterase activity.

The protein localises to the cytoplasm. It catalyses the reaction [protein]-L-glutamate 5-O-methyl ester + H2O = L-glutamyl-[protein] + methanol + H(+). The enzyme catalyses L-glutaminyl-[protein] + H2O = L-glutamyl-[protein] + NH4(+). Functionally, involved in chemotaxis. Part of a chemotaxis signal transduction system that modulates chemotaxis in response to various stimuli. Catalyzes the demethylation of specific methylglutamate residues introduced into the chemoreceptors (methyl-accepting chemotaxis proteins or MCP) by CheR. Also mediates the irreversible deamidation of specific glutamine residues to glutamic acid. In Cupriavidus metallidurans (strain ATCC 43123 / DSM 2839 / NBRC 102507 / CH34) (Ralstonia metallidurans), this protein is Protein-glutamate methylesterase/protein-glutamine glutaminase 1.